The primary structure comprises 388 residues: Probable proton-coupled zinc antiporter SLC30A3 (388 aa).

Residues 1 to 42 (MEPSPASGGSETTRLVSPRDRSSAGGGLRLKSLFTEPSEPLP) form a disordered region. Residues 1–75 (MEPSPASGGS…SPERAQARRQ (75 aa)) are Cytoplasmic-facing. A phosphoserine mark is found at S63 and S66. A helical transmembrane segment spans residues 76 to 96 (LYAACVVCFIFMAGEVVGGYL). Over 97 to 105 (AHSLAIMTD) the chain is Lumenal. A helical transmembrane segment spans residues 106–126 (AAHLLADIGSMMASLFSLWLS). The Zn(2+) site is built by H108 and D112. The Cytoplasmic portion of the chain corresponds to 127–145 (TRPATRTMTFGWHRSETLG). The chain crosses the membrane as a helical span at residues 146-166 (ALASVVSLWIVTGILLYLAFL). Topologically, residues 167–177 (RLLHSDYHIEA) are lumenal. A helical transmembrane segment spans residues 178 to 198 (GAMLLTASIAVCANMIMAFVL). The Cytoplasmic portion of the chain corresponds to 199 to 235 (HQTGAPHSHGPRGAEYAPLEEGHGHPLSLGNTSVRAA). A helical membrane pass occupies residues 236 to 256 (FVHVLGDLLQSLGVLAASILI). Residues H238 and D242 each contribute to the Zn(2+) site. At 257–263 (YFKPQYK) the chain is on the lumenal side. The helical transmembrane segment at 264–284 (VADPISTFLFSICALGSTAPT) threads the bilayer. Over 285 to 388 (LRDVLLVLME…CLRCREPPKA (104 aa)) the chain is Cytoplasmic.

Belongs to the cation diffusion facilitator (CDF) transporter (TC 2.A.4) family. SLC30A subfamily. Homodimer. Homodimerization could regulate efficiency of zinc transport. Interacts with TMEM163.

It is found in the cytoplasmic vesicle. Its subcellular location is the secretory vesicle. The protein resides in the synaptic vesicle membrane. The protein localises to the synapse. It localises to the synaptosome. It is found in the late endosome membrane. Its subcellular location is the lysosome membrane. It carries out the reaction Zn(2+)(in) + 2 H(+)(out) = Zn(2+)(out) + 2 H(+)(in). Probable proton-coupled zinc ion antiporter mediating the import of zinc from cytoplasm into synaptic vesicles and participating to cellular zinc ion homeostasis in the brain. The sequence is that of Probable proton-coupled zinc antiporter SLC30A3 from Rattus norvegicus (Rat).